A 379-amino-acid chain; its full sequence is Chaperone protein DnaJ (379 aa).

Positions 5–70 (DYYEVLGVQK…QKRAAYDRFG (66 aa)) constitute a J domain. Residues 137–215 (GATTTVRVPT…CGGQGRVRKE (79 aa)) form a CR-type zinc finger. Positions 150, 153, 167, 170, 189, 192, 203, and 206 each coordinate Zn(2+). CXXCXGXG motif repeat units follow at residues 150–157 (CESCNGTG), 167–174 (CPTCNGHG), 189–196 (CPACHGVG), and 203–210 (CRTCGGQG).

This sequence belongs to the DnaJ family. As to quaternary structure, homodimer. Zn(2+) serves as cofactor.

It localises to the cytoplasm. Functionally, participates actively in the response to hyperosmotic and heat shock by preventing the aggregation of stress-denatured proteins and by disaggregating proteins, also in an autonomous, DnaK-independent fashion. Unfolded proteins bind initially to DnaJ; upon interaction with the DnaJ-bound protein, DnaK hydrolyzes its bound ATP, resulting in the formation of a stable complex. GrpE releases ADP from DnaK; ATP binding to DnaK triggers the release of the substrate protein, thus completing the reaction cycle. Several rounds of ATP-dependent interactions between DnaJ, DnaK and GrpE are required for fully efficient folding. Also involved, together with DnaK and GrpE, in the DNA replication of plasmids through activation of initiation proteins. The chain is Chaperone protein DnaJ from Rhodospirillum centenum (strain ATCC 51521 / SW).